We begin with the raw amino-acid sequence, 683 residues long: Elongation factor G 2 (683 aa).

One can recognise a tr-type G domain in the interval 4–279 (QQMRNIGIMA…AVVEYLPAPQ (276 aa)). GTP-binding positions include 13-20 (AHVDAGKT), 77-81 (DTPGH), and 131-134 (NKMD).

This sequence belongs to the TRAFAC class translation factor GTPase superfamily. Classic translation factor GTPase family. EF-G/EF-2 subfamily.

Its subcellular location is the cytoplasm. Functionally, catalyzes the GTP-dependent ribosomal translocation step during translation elongation. During this step, the ribosome changes from the pre-translocational (PRE) to the post-translocational (POST) state as the newly formed A-site-bound peptidyl-tRNA and P-site-bound deacylated tRNA move to the P and E sites, respectively. Catalyzes the coordinated movement of the two tRNA molecules, the mRNA and conformational changes in the ribosome. In Treponema pallidum (strain Nichols), this protein is Elongation factor G 2 (fusB).